The sequence spans 282 residues: HTH-type transcriptional activator RhaR (282 aa).

Residues D179–L277 enclose the HTH araC/xylS-type domain. 2 DNA-binding regions (H-T-H motif) span residues D196 to T217 and I244 to T267.

Binds DNA as a dimer.

It localises to the cytoplasm. Activates expression of the rhaSR operon in response to L-rhamnose. This chain is HTH-type transcriptional activator RhaR, found in Escherichia coli O139:H28 (strain E24377A / ETEC).